We begin with the raw amino-acid sequence, 137 residues long: Thioredoxin-like protein R548 (137 aa).

The 136-residue stretch at 2 to 137 (SKDSVETNTI…LEKSIVESSQ (136 aa)) folds into the Thioredoxin domain. Residues C61 and C64 each act as nucleophile in the active site. Cysteines 61 and 64 form a disulfide.

Belongs to the thioredoxin family.

Functionally, participates in various redox reactions through the reversible oxidation of its active center dithiol to a disulfide and catalyzes dithiol-disulfide exchange reactions. The chain is Thioredoxin-like protein R548 from Acanthamoeba polyphaga mimivirus (APMV).